We begin with the raw amino-acid sequence, 484 residues long: Probable glycine dehydrogenase (decarboxylating) subunit 2 (484 aa).

Lys264 carries the N6-(pyridoxal phosphate)lysine modification.

It belongs to the GcvP family. C-terminal subunit subfamily. In terms of assembly, the glycine cleavage system is composed of four proteins: P, T, L and H. In this organism, the P 'protein' is a heterodimer of two subunits. Pyridoxal 5'-phosphate serves as cofactor.

It carries out the reaction N(6)-[(R)-lipoyl]-L-lysyl-[glycine-cleavage complex H protein] + glycine + H(+) = N(6)-[(R)-S(8)-aminomethyldihydrolipoyl]-L-lysyl-[glycine-cleavage complex H protein] + CO2. In terms of biological role, the glycine cleavage system catalyzes the degradation of glycine. The P protein binds the alpha-amino group of glycine through its pyridoxal phosphate cofactor; CO(2) is released and the remaining methylamine moiety is then transferred to the lipoamide cofactor of the H protein. In Legionella pneumophila (strain Paris), this protein is Probable glycine dehydrogenase (decarboxylating) subunit 2.